A 430-amino-acid chain; its full sequence is Adenylosuccinate synthetase (430 aa).

GTP contacts are provided by residues 12 to 18 (GDEGKGK) and 40 to 42 (GHT). Residue Asp-13 is the Proton acceptor of the active site. 2 residues coordinate Mg(2+): Asp-13 and Gly-40. Residues 13–16 (DEGK), 38–41 (NAGH), Thr-128, Arg-142, Gln-223, Thr-238, and Arg-302 contribute to the IMP site. Residue His-41 is the Proton donor of the active site. 298–304 (TTTGRPR) is a substrate binding site. GTP is bound by residues Arg-304, 330–332 (LLD), and 412–414 (SVG).

It belongs to the adenylosuccinate synthetase family. Homodimer. The cofactor is Mg(2+).

It is found in the cytoplasm. The catalysed reaction is IMP + L-aspartate + GTP = N(6)-(1,2-dicarboxyethyl)-AMP + GDP + phosphate + 2 H(+). The protein operates within purine metabolism; AMP biosynthesis via de novo pathway; AMP from IMP: step 1/2. Functionally, plays an important role in the de novo pathway of purine nucleotide biosynthesis. Catalyzes the first committed step in the biosynthesis of AMP from IMP. The protein is Adenylosuccinate synthetase of Listeria monocytogenes serotype 4b (strain CLIP80459).